Consider the following 291-residue polypeptide: Probable alpha-L-glutamate ligase (291 aa).

The ATP-grasp domain occupies 104–287; sequence HQLLASQGID…VAGTIIQHLE (184 aa). Residues Lys141, 178-179, Asp187, and 211-213 each bind ATP; these read EF and RSN. The Mg(2+) site is built by Asp248, Glu260, and Asn262. 3 residues coordinate Mn(2+): Asp248, Glu260, and Asn262.

It belongs to the RimK family. The cofactor is Mg(2+). Mn(2+) is required as a cofactor.

The polypeptide is Probable alpha-L-glutamate ligase (Xanthomonas campestris pv. campestris (strain 8004)).